The sequence spans 953 residues: Coatomer subunit beta (953 aa).

Residue Thr-2 is modified to N-acetylthreonine. 6 HEAT repeats span residues 96 to 131 (HEMI…KEAE), 132 to 168 (LLEP…NFEN), 240 to 276 (SERA…SAPT), 277 to 314 (AIKA…HPAH), 316 to 353 (RVLQ…SRNV), and 396 to 433 (DMAA…RFDN). Position 494 is an N6-acetyllysine (Lys-494).

In terms of assembly, oligomeric complex that consists of at least the alpha, beta, beta', gamma, delta, epsilon and zeta subunits. Interacts with SCYL1. Interacts with CAPN8. Interacts with COPG1. Interacts with ARF1 (myristoylated); this interaction is required for binding of COPB1 to Golgi membranes. Interacts (via trunk domain) with ARF1 (via switch I region); the interaction is direct. Interacts with KCNK2 (via N-terminus); this interaction increases the channel-mediated whole cell currents and promotes plasma membrane expression of KCNK2. Interacts with PRKCE. Interacts with STX17. Interacts with TMEM115. Interacts with TMEM41B. Post-translationally, proteolytically cleaved between Ser-528 and Ser-529 by CAPN8.

It is found in the cytoplasm. It localises to the golgi apparatus membrane. Its subcellular location is the cytoplasmic vesicle. The protein localises to the COPI-coated vesicle membrane. The protein resides in the cell membrane. It is found in the endoplasmic reticulum-Golgi intermediate compartment. It localises to the microsome membrane. In terms of biological role, the coatomer is a cytosolic protein complex that binds to dilysine motifs and reversibly associates with Golgi non-clathrin-coated vesicles, which further mediate biosynthetic protein transport from the ER, via the Golgi up to the trans Golgi network. Coatomer complex is required for budding from Golgi membranes, and is essential for the retrograde Golgi-to-ER transport of dilysine-tagged proteins. In mammals, the coatomer can only be recruited by membranes associated to ADP-ribosylation factors (ARFs), which are small GTP-binding proteins; the complex also influences the Golgi structural integrity, as well as the processing, activity, and endocytic recycling of LDL receptors. Involved in the Golgi disassembly and reassembly processes during cell cycle. Involved in autophagy by playing a role in early endosome function. Plays a role in organellar compartmentalization of secretory compartments including endoplasmic reticulum (ER)-Golgi intermediate compartment (ERGIC), Golgi, trans-Golgi network (TGN) and recycling endosomes, and in biosynthetic transport of CAV1. Plays a functional role in facilitating the transport of kappa-type opioid receptor mRNAs into axons and enhances translation of these proteins in the axonal compartment of dorsal root ganglion (DRG) cells. Required for limiting lipid storage in lipid droplets. Involved in lipid homeostasis by regulating the presence of perilipin family members PLIN2 and PLIN3 at the lipid droplet surface and promoting the association of adipocyte triglyceride lipase (PNPLA2) with the lipid droplet surface to mediate lipolysis. The chain is Coatomer subunit beta (Copb1) from Rattus norvegicus (Rat).